The chain runs to 201 residues: Probable phosphopantothenoylcysteine decarboxylase (201 aa).

FMN contacts are provided by residues G20–V22, S45–S47, S98–T101, and A132. Residues N134 and K164–A166 each bind substrate. C167 serves as the catalytic Proton donor. M175 contributes to the substrate binding site.

Belongs to the HFCD (homooligomeric flavin containing Cys decarboxylase) superfamily. As to quaternary structure, homotrimer. FMN is required as a cofactor. As to expression, expressed in roots, shoots, leaves, flowers, developing siliques and seeds.

It carries out the reaction N-[(R)-4-phosphopantothenoyl]-L-cysteine + H(+) = (R)-4'-phosphopantetheine + CO2. The protein operates within cofactor biosynthesis; coenzyme A biosynthesis; CoA from (R)-pantothenate: step 3/5. Its function is as follows. Involved in plant growth and salt and osmotic tolerance. Catalyzes the decarboxylation of 4'-phosphopantothenoylcysteine to 4'-phosphopantetheine, a key step in coenzyme A biosynthesis. The enzyme is also able to decarboxylate pantothenoylcysteine to pantothenoylcysteamine. This is Probable phosphopantothenoylcysteine decarboxylase (HAL3B) from Arabidopsis thaliana (Mouse-ear cress).